The sequence spans 540 residues: Calnexin homolog (540 aa).

An N-terminal signal peptide occupies residues Met-1–Ala-29. The Lumenal segment spans residues Ser-30–Thr-469. Ca(2+) contacts are provided by Ser-38 and Asp-69. A disulfide bridge links Cys-112 with Cys-147. An alpha-D-glucoside contacts are provided by Tyr-116, Lys-118, Tyr-138, and Asp-145. A disordered region spans residues Leu-221 to Trp-301. Positions Ile-227–Glu-360 are p domain (Extended arm). Over residues Pro-228 to Asp-253 the composition is skewed to basic and acidic residues. A run of 5 repeats spans residues Asp-229 to Glu-240, Asp-246 to Glu-257, Asp-265 to Asp-276, Asp-284 to Asp-295, and Gly-299 to Pro-309. 2 4 X approximate repeats regions span residues Asp-229–Asp-295 and Gly-299–Pro-356. Acidic residues-rich tracts occupy residues Asp-254–Pro-285 and Asp-292–Trp-301. The cysteines at positions 311 and 317 are disulfide-linked. 3 consecutive repeat copies span residues Gly-318–Pro-328, Gly-332–Pro-342, and Gly-346–Pro-356. An alpha-D-glucoside is bound at residue Glu-375. Asp-386 lines the Ca(2+) pocket. Asn-467 carries N-linked (GlcNAc...) asparagine glycosylation. The chain crosses the membrane as a helical span at residues Ile-470–Gly-490. At Gly-491–Thr-540 the chain is on the cytoplasmic side. The disordered stretch occupies residues Asn-499–Thr-540.

It belongs to the calreticulin family.

It is found in the endoplasmic reticulum membrane. In terms of biological role, calcium-binding protein that interacts with newly synthesized monoglucosylated glycoproteins in the endoplasmic reticulum. It may act in assisting protein assembly and/or in the retention within the ER of unassembled protein subunits. It seems to play a major role in the quality control apparatus of the ER by the retention of incorrectly folded proteins. The sequence is that of Calnexin homolog from Helianthus tuberosus (Jerusalem artichoke).